Consider the following 278-residue polypeptide: DegV domain-containing protein YejH (278 aa).

Residues 3–277 form the DegV domain; it reads IKIVTDSSIT…PGAWAIMIDY (275 aa). Residues threonine 60 and serine 92 each contribute to the hexadecanoate site.

Functionally, may bind long-chain fatty acids, such as palmitate, and may play a role in lipid transport or fatty acid metabolism. The polypeptide is DegV domain-containing protein YejH (yejH) (Lactococcus lactis subsp. lactis (strain IL1403) (Streptococcus lactis)).